The chain runs to 205 residues: Cytochrome c biogenesis ATP-binding export protein CcmA (205 aa).

The ABC transporter domain maps to Leu-2–Gly-204. Gly-34 to Thr-41 contributes to the ATP binding site.

Belongs to the ABC transporter superfamily. CcmA exporter (TC 3.A.1.107) family. The complex is composed of two ATP-binding proteins (CcmA) and two transmembrane proteins (CcmB).

The protein resides in the cell inner membrane. The catalysed reaction is heme b(in) + ATP + H2O = heme b(out) + ADP + phosphate + H(+). In terms of biological role, part of the ABC transporter complex CcmAB involved in the biogenesis of c-type cytochromes; once thought to export heme, this seems not to be the case, but its exact role is uncertain. Responsible for energy coupling to the transport system. This chain is Cytochrome c biogenesis ATP-binding export protein CcmA, found in Vibrio vulnificus (strain CMCP6).